The following is a 272-amino-acid chain: Catabolic 3-dehydroquinate dehydratase (272 aa).

3-dehydroquinate is bound by residues 66-68 (EFR) and arginine 102. The Proton donor/acceptor role is filled by histidine 163. Lysine 190 (schiff-base intermediate with substrate) is an active-site residue. 3-dehydroquinate-binding residues include arginine 232, serine 251, and glutamine 255.

It belongs to the type-I 3-dehydroquinase family.

It catalyses the reaction 3-dehydroquinate = 3-dehydroshikimate + H2O. Its pathway is aromatic compound metabolism; 3,4-dihydroxybenzoate biosynthesis; 3,4-dihydroxybenzoate from 3-dehydroquinate: step 1/2. Involved in the biosynthesis of protocatechuate. Catalyzes the catabolic dehydration of 3-dehydroquinate (DHQ) to yield 3-dehydroshikimate. In Acinetobacter baylyi (strain ATCC 33305 / BD413 / ADP1), this protein is Catabolic 3-dehydroquinate dehydratase.